The chain runs to 488 residues: Kynurenine 3-monooxygenase 2 (488 aa).

It belongs to the aromatic-ring hydroxylase family. KMO subfamily. It depends on FAD as a cofactor.

It localises to the mitochondrion outer membrane. It carries out the reaction L-kynurenine + NADPH + O2 + H(+) = 3-hydroxy-L-kynurenine + NADP(+) + H2O. It functions in the pathway cofactor biosynthesis; NAD(+) biosynthesis; quinolinate from L-kynurenine: step 1/3. Catalyzes the hydroxylation of L-kynurenine (L-Kyn) to form 3-hydroxy-L-kynurenine (L-3OHKyn). Required for synthesis of quinolinic acid. This chain is Kynurenine 3-monooxygenase 2 (bna4-2), found in Aspergillus niger (strain ATCC MYA-4892 / CBS 513.88 / FGSC A1513).